A 350-amino-acid chain; its full sequence is Tetraacyldisaccharide 4'-kinase (350 aa).

48-55 is a binding site for ATP; the sequence is SAGGTGKT.

Belongs to the LpxK family.

It catalyses the reaction a lipid A disaccharide + ATP = a lipid IVA + ADP + H(+). It participates in glycolipid biosynthesis; lipid IV(A) biosynthesis; lipid IV(A) from (3R)-3-hydroxytetradecanoyl-[acyl-carrier-protein] and UDP-N-acetyl-alpha-D-glucosamine: step 6/6. In terms of biological role, transfers the gamma-phosphate of ATP to the 4'-position of a tetraacyldisaccharide 1-phosphate intermediate (termed DS-1-P) to form tetraacyldisaccharide 1,4'-bis-phosphate (lipid IVA). The sequence is that of Tetraacyldisaccharide 4'-kinase from Chlorobium limicola (strain DSM 245 / NBRC 103803 / 6330).